We begin with the raw amino-acid sequence, 253 residues long: Imidazole glycerol phosphate synthase subunit HisF (253 aa).

Active-site residues include aspartate 11 and aspartate 130.

It belongs to the HisA/HisF family. In terms of assembly, heterodimer of HisH and HisF.

Its subcellular location is the cytoplasm. It carries out the reaction 5-[(5-phospho-1-deoxy-D-ribulos-1-ylimino)methylamino]-1-(5-phospho-beta-D-ribosyl)imidazole-4-carboxamide + L-glutamine = D-erythro-1-(imidazol-4-yl)glycerol 3-phosphate + 5-amino-1-(5-phospho-beta-D-ribosyl)imidazole-4-carboxamide + L-glutamate + H(+). The protein operates within amino-acid biosynthesis; L-histidine biosynthesis; L-histidine from 5-phospho-alpha-D-ribose 1-diphosphate: step 5/9. Functionally, IGPS catalyzes the conversion of PRFAR and glutamine to IGP, AICAR and glutamate. The HisF subunit catalyzes the cyclization activity that produces IGP and AICAR from PRFAR using the ammonia provided by the HisH subunit. The polypeptide is Imidazole glycerol phosphate synthase subunit HisF (Desulfitobacterium hafniense (strain DSM 10664 / DCB-2)).